Consider the following 325-residue polypeptide: Aldo-keto reductase family 1 member A1 (325 aa).

The residue at position 2 (T2) is an N-acetylthreonine. A Phosphoserine modification is found at S4. NADP(+) contacts are provided by residues 11 to 20 (GQKMPLIGLG), T21, and W22. A Phosphoserine modification is found at S38. Residue D45 participates in NADP(+) binding. Catalysis depends on Y50, which acts as the Proton donor. N6-acetyllysine; alternate is present on K127. K127 is modified (N6-succinyllysine; alternate). An N6-succinyllysine modification is found at K145. Positions 162, 163, 211, 213, 215, 216, 263, 264, 265, 269, 272, and 273 each coordinate NADP(+). S211 bears the Phosphoserine mark.

This sequence belongs to the aldo/keto reductase family. In terms of assembly, monomer. In terms of tissue distribution, widely expressed.

The protein resides in the cytoplasm. The protein localises to the cytosol. It localises to the apical cell membrane. It catalyses the reaction a primary alcohol + NADP(+) = an aldehyde + NADPH + H(+). The catalysed reaction is L-gulonate + NADP(+) = aldehydo-D-glucuronate + NADPH + H(+). The enzyme catalyses L-gulono-1,4-lactone + NADP(+) = D-glucurono-3,6-lactone + NADPH + H(+). It carries out the reaction allyl alcohol + NADP(+) = acrolein + NADPH + H(+). It catalyses the reaction glycerol + NADP(+) = D-glyceraldehyde + NADPH + H(+). The catalysed reaction is glycerol + NADP(+) = L-glyceraldehyde + NADPH + H(+). The enzyme catalyses hydroxyacetone + NADP(+) = methylglyoxal + NADPH + H(+). It carries out the reaction 3-deoxyfructose + NADP(+) = 3-deoxyglucosone + NADPH + H(+). It catalyses the reaction (R)-mevalonate + NADP(+) = (R)-mevaldate + NADPH + H(+). The catalysed reaction is pyridine 3-methanol + NADP(+) = pyridine-3-carbaldehyde + NADPH + H(+). The enzyme catalyses S-nitroso-CoA + NADPH + H(+) = sulfinamide-CoA + NADP(+). It carries out the reaction S-nitrosoglutathione + NADPH + H(+) = S-(hydroxysulfenamide)glutathione + NADP(+). Its function is as follows. Catalyzes the NADPH-dependent reduction of a wide variety of carbonyl-containing compounds to their corresponding alcohols. Displays enzymatic activity towards endogenous metabolites such as aromatic and aliphatic aldehydes, ketones, monosaccharides and bile acids, with a preference for negatively charged substrates, such as glucuronate and succinic semialdehyde. Plays an important role in ascorbic acid biosynthesis by catalyzing the reduction of D-glucuronic acid and D-glucurono-gamma-lactone. Functions as a detoxifiying enzyme by reducing a range of toxic aldehydes. Reduces methylglyoxal and 3-deoxyglucosone, which are present at elevated levels under hyperglycemic conditions and are cytotoxic. Involved in the detoxification of lipid-derived aldehydes like acrolein. Plays a role in the activation of procarcinogens, such as polycyclic aromatic hydrocarbon trans-dihydrodiols, and in the metabolism of various xenobiotics and drugs. Also acts as an inhibitor of protein S-nitrosylation by mediating degradation of S-nitroso-coenzyme A (S-nitroso-CoA), a cofactor required to S-nitrosylate proteins. S-nitroso-CoA reductase activity is involved in reprogramming intermediary metabolism in renal proximal tubules, notably by inhibiting protein S-nitrosylation of isoform 2 of PKM (PKM2). Also acts as a S-nitroso-glutathione reductase by catalyzing the NADPH-dependent reduction of S-nitrosoglutathione. Displays no reductase activity towards retinoids. The polypeptide is Aldo-keto reductase family 1 member A1 (Mus musculus (Mouse)).